The following is a 338-amino-acid chain: F420-dependent glucose-6-phosphate dehydrogenase (338 aa).

Aspartate 40 serves as a coordination point for coenzyme F420-(gamma-Glu)n. Catalysis depends on histidine 41, which acts as the Proton donor. Coenzyme F420-(gamma-Glu)n is bound by residues threonine 77 and threonine 108–glycine 109. The active-site Proton acceptor is the glutamate 110. Coenzyme F420-(gamma-Glu)n-binding positions include asparagine 113, glycine 178 to glycine 179, and valine 181 to valine 182. Substrate-binding residues include threonine 196, lysine 199, lysine 260, and arginine 284.

It belongs to the F420-dependent glucose-6-phosphate dehydrogenase family. As to quaternary structure, homodimer.

It catalyses the reaction oxidized coenzyme F420-(gamma-L-Glu)(n) + D-glucose 6-phosphate + H(+) = 6-phospho-D-glucono-1,5-lactone + reduced coenzyme F420-(gamma-L-Glu)(n). Functionally, catalyzes the coenzyme F420-dependent oxidation of glucose 6-phosphate (G6P) to 6-phosphogluconolactone. In Gordonia bronchialis (strain ATCC 25592 / DSM 43247 / BCRC 13721 / JCM 3198 / KCTC 3076 / NBRC 16047 / NCTC 10667) (Rhodococcus bronchialis), this protein is F420-dependent glucose-6-phosphate dehydrogenase.